The chain runs to 302 residues: MDTPLDELQWKSPEWIQAFGLRTDNVLDYFAESPFFDKTANNHVIKMQRQFSQLPNNGAAAGSMNPETMRDAHSEDMGQEQEFSYVDPIRRAILEKYVVHAFLERELMKVRGIEYVLANVREPDFWVIKKQRRTSPTAIEPLQTYYIVGANVYQSPTVFKIVQSRLLACSSHLSATLAELNNLVEFKPSQGVQYKNILDMPVTTRKTGNTANVGSVPGTISASLNMPMVNTGRLNSAGAATIGTSGVPNSAGMTGANTMATGQTGATSRFENGSSRSSTDAISTDTLDKLLITSMKSTPEYI.

The interval 260 to 281 (ATGQTGATSRFENGSSRSSTDA) is disordered.

This sequence belongs to the Mediator complex subunit 6 family. As to quaternary structure, component of the Mediator complex.

The protein localises to the nucleus. In terms of biological role, component of the Mediator complex, a coactivator involved in the regulated transcription of nearly all RNA polymerase II-dependent genes. Mediator functions as a bridge to convey information from gene-specific regulatory proteins to the basal RNA polymerase II transcription machinery. Mediator is recruited to promoters by direct interactions with regulatory proteins and serves as a scaffold for the assembly of a functional preinitiation complex with RNA polymerase II and the general transcription factors. The polypeptide is Mediator of RNA polymerase II transcription subunit 6 (MED6) (Candida glabrata (strain ATCC 2001 / BCRC 20586 / JCM 3761 / NBRC 0622 / NRRL Y-65 / CBS 138) (Yeast)).